The sequence spans 439 residues: Proline--tRNA ligase (439 aa).

Belongs to the class-II aminoacyl-tRNA synthetase family. ProS type 2 subfamily. In terms of assembly, homodimer.

It is found in the cytoplasm. It catalyses the reaction tRNA(Pro) + L-proline + ATP = L-prolyl-tRNA(Pro) + AMP + diphosphate. Catalyzes the attachment of proline to tRNA(Pro) in a two-step reaction: proline is first activated by ATP to form Pro-AMP and then transferred to the acceptor end of tRNA(Pro). The polypeptide is Proline--tRNA ligase (Rhodopseudomonas palustris (strain HaA2)).